The sequence spans 274 residues: Bis(5'-nucleosyl)-tetraphosphatase, symmetrical (274 aa).

This sequence belongs to the Ap4A hydrolase family.

The catalysed reaction is P(1),P(4)-bis(5'-adenosyl) tetraphosphate + H2O = 2 ADP + 2 H(+). Functionally, hydrolyzes diadenosine 5',5'''-P1,P4-tetraphosphate to yield ADP. The protein is Bis(5'-nucleosyl)-tetraphosphatase, symmetrical of Buchnera aphidicola subsp. Acyrthosiphon pisum (strain Tuc7).